Reading from the N-terminus, the 158-residue chain is 6,7-dimethyl-8-ribityllumazine synthase (158 aa).

5-amino-6-(D-ribitylamino)uracil is bound by residues F22, 56-58 (ALE), and 80-82 (VVI). 85 to 86 (ET) is a binding site for (2S)-2-hydroxy-3-oxobutyl phosphate. Residue H88 is the Proton donor of the active site. N113 lines the 5-amino-6-(D-ribitylamino)uracil pocket. R127 is a binding site for (2S)-2-hydroxy-3-oxobutyl phosphate.

It belongs to the DMRL synthase family.

The catalysed reaction is (2S)-2-hydroxy-3-oxobutyl phosphate + 5-amino-6-(D-ribitylamino)uracil = 6,7-dimethyl-8-(1-D-ribityl)lumazine + phosphate + 2 H2O + H(+). Its pathway is cofactor biosynthesis; riboflavin biosynthesis; riboflavin from 2-hydroxy-3-oxobutyl phosphate and 5-amino-6-(D-ribitylamino)uracil: step 1/2. Its function is as follows. Catalyzes the formation of 6,7-dimethyl-8-ribityllumazine by condensation of 5-amino-6-(D-ribitylamino)uracil with 3,4-dihydroxy-2-butanone 4-phosphate. This is the penultimate step in the biosynthesis of riboflavin. This chain is 6,7-dimethyl-8-ribityllumazine synthase, found in Neisseria meningitidis serogroup C / serotype 2a (strain ATCC 700532 / DSM 15464 / FAM18).